A 362-amino-acid polypeptide reads, in one-letter code: Aminomethyltransferase (362 aa).

Belongs to the GcvT family. The glycine cleavage system is composed of four proteins: P, T, L and H.

The enzyme catalyses N(6)-[(R)-S(8)-aminomethyldihydrolipoyl]-L-lysyl-[protein] + (6S)-5,6,7,8-tetrahydrofolate = N(6)-[(R)-dihydrolipoyl]-L-lysyl-[protein] + (6R)-5,10-methylene-5,6,7,8-tetrahydrofolate + NH4(+). The glycine cleavage system catalyzes the degradation of glycine. This Chloroherpeton thalassium (strain ATCC 35110 / GB-78) protein is Aminomethyltransferase.